Here is a 700-residue protein sequence, read N- to C-terminus: Elongation factor G (700 aa).

The region spanning 10-286 (TKVRNIGIMA…AVVDYLPSPL (277 aa)) is the tr-type G domain. GTP contacts are provided by residues 19–26 (AHIDAGKT), 83–87 (DTPGH), and 137–140 (NKMD).

The protein belongs to the TRAFAC class translation factor GTPase superfamily. Classic translation factor GTPase family. EF-G/EF-2 subfamily.

It is found in the cytoplasm. Its function is as follows. Catalyzes the GTP-dependent ribosomal translocation step during translation elongation. During this step, the ribosome changes from the pre-translocational (PRE) to the post-translocational (POST) state as the newly formed A-site-bound peptidyl-tRNA and P-site-bound deacylated tRNA move to the P and E sites, respectively. Catalyzes the coordinated movement of the two tRNA molecules, the mRNA and conformational changes in the ribosome. The polypeptide is Elongation factor G (Saccharopolyspora erythraea (strain ATCC 11635 / DSM 40517 / JCM 4748 / NBRC 13426 / NCIMB 8594 / NRRL 2338)).